A 90-amino-acid chain; its full sequence is UPF0223 protein SH1855 (90 aa).

This sequence belongs to the UPF0223 family.

In Staphylococcus haemolyticus (strain JCSC1435), this protein is UPF0223 protein SH1855.